A 202-amino-acid chain; its full sequence is Small ribosomal subunit protein uS4c (202 aa).

One can recognise an S4 RNA-binding domain in the interval 90-154 (MRLDNILFRL…SQSIITKNLN (65 aa)).

Belongs to the universal ribosomal protein uS4 family. In terms of assembly, part of the 30S ribosomal subunit. Contacts protein S5. The interaction surface between S4 and S5 is involved in control of translational fidelity.

The protein localises to the plastid. It is found in the chloroplast. Functionally, one of the primary rRNA binding proteins, it binds directly to 16S rRNA where it nucleates assembly of the body of the 30S subunit. In terms of biological role, with S5 and S12 plays an important role in translational accuracy. This is Small ribosomal subunit protein uS4c (rps4) from Monoclea forsteri (Liverwort).